Here is a 706-residue protein sequence, read N- to C-terminus: Elongation factor G (706 aa).

Residues 8–297 form the tr-type G domain; it reads SYVRNIGIGA…AVVDYLPSPN (290 aa). GTP-binding positions include 17–24, 95–99, and 149–152; these read AHIDAGKT, DTPGH, and NKMD.

This sequence belongs to the TRAFAC class translation factor GTPase superfamily. Classic translation factor GTPase family. EF-G/EF-2 subfamily.

Its subcellular location is the cytoplasm. Functionally, catalyzes the GTP-dependent ribosomal translocation step during translation elongation. During this step, the ribosome changes from the pre-translocational (PRE) to the post-translocational (POST) state as the newly formed A-site-bound peptidyl-tRNA and P-site-bound deacylated tRNA move to the P and E sites, respectively. Catalyzes the coordinated movement of the two tRNA molecules, the mRNA and conformational changes in the ribosome. The polypeptide is Elongation factor G (Orientia tsutsugamushi (strain Boryong) (Rickettsia tsutsugamushi)).